A 789-amino-acid chain; its full sequence is Aconitate hydratase, mitochondrial (789 aa).

Residues 1-32 constitute a mitochondrion transit peptide; the sequence is MFCKISRAPARMGSRIFTQSTLRSFSCAPVAA. Residues Q106 and 199–201 each bind substrate; that span reads DSH. [4Fe-4S] cluster contacts are provided by C392, C455, and C458. Residues R481, R486, R613, and 676 to 677 contribute to the substrate site; that span reads SR.

The protein belongs to the aconitase/IPM isomerase family. Monomer. Requires [4Fe-4S] cluster as cofactor.

The protein resides in the mitochondrion. The catalysed reaction is citrate = D-threo-isocitrate. Its pathway is carbohydrate metabolism; tricarboxylic acid cycle; isocitrate from oxaloacetate: step 2/2. Catalyzes the isomerization of citrate to isocitrate via cis-aconitate, a step in the citric acid cycle. This is Aconitate hydratase, mitochondrial from Schizosaccharomyces pombe (strain 972 / ATCC 24843) (Fission yeast).